The following is a 60-amino-acid chain: Metallothionein B (60 aa).

Residues 1 to 28 are beta; that stretch reads MDPCECTKSGTCNCGGSCTCTNCSCTSC. 20 residues coordinate a divalent metal cation: Cys4, Cys6, Cys12, Cys14, Cys18, Cys20, Cys23, Cys25, Cys28, Cys32, Cys33, Cys35, Cys36, Cys40, Cys43, Cys47, Cys49, Cys54, Cys58, and Cys59. The segment at 29–60 is alpha; the sequence is KKSCCPCCPSGCTKCASGCVCKGKTCDTSCCQ.

This sequence belongs to the metallothionein superfamily. Type 1 family.

Metallothioneins have a high content of cysteine residues that bind various heavy metals. In Chaenocephalus aceratus (Blackfin icefish), this protein is Metallothionein B (mtb).